The sequence spans 252 residues: 5'-nucleotidase SurE (252 aa).

A divalent metal cation contacts are provided by Asp-8, Asp-9, Ser-39, and Asn-96.

This sequence belongs to the SurE nucleotidase family. A divalent metal cation serves as cofactor.

It is found in the cytoplasm. The enzyme catalyses a ribonucleoside 5'-phosphate + H2O = a ribonucleoside + phosphate. Functionally, nucleotidase that shows phosphatase activity on nucleoside 5'-monophosphates. The chain is 5'-nucleotidase SurE from Petrotoga mobilis (strain DSM 10674 / SJ95).